The following is a 396-amino-acid chain: Elongation factor Tu 1 (396 aa).

The tr-type G domain maps to 10–206 (KPHINVGTIG…VLDSYIPEPQ (197 aa)). The G1 stretch occupies residues 19-26 (GHVDHGKT). A GTP-binding site is contributed by 19–26 (GHVDHGKT). Residue threonine 26 participates in Mg(2+) binding. Residues 60–64 (GITIN) form a G2 region. Residues 81 to 84 (DCPG) form a G3 region. GTP contacts are provided by residues 81–85 (DCPGH) and 136–139 (NKAD). A G4 region spans residues 136–139 (NKAD). The G5 stretch occupies residues 174–176 (SAL).

Belongs to the TRAFAC class translation factor GTPase superfamily. Classic translation factor GTPase family. EF-Tu/EF-1A subfamily. As to quaternary structure, monomer.

It is found in the cytoplasm. The enzyme catalyses GTP + H2O = GDP + phosphate + H(+). In terms of biological role, GTP hydrolase that promotes the GTP-dependent binding of aminoacyl-tRNA to the A-site of ribosomes during protein biosynthesis. The chain is Elongation factor Tu 1 from Nitrosomonas eutropha (strain DSM 101675 / C91 / Nm57).